Reading from the N-terminus, the 365-residue chain is Iron-sulfur cluster assembly protein SufC (365 aa).

The ABC transporter domain occupies 118 to 364 (LEINDLHAIE…ESDGYAQFVE (247 aa)). 152–159 (GRNGSGKS) contacts ATP.

The protein belongs to the ABC transporter superfamily. Ycf16 family. In terms of assembly, component of a complex composed of SufB, SufC and SufD in a stoichiometric ratio of 1:2:1. Interacts with SufB. Interacts with SufD; the interaction enhances the ATPase activity of SufC.

The protein localises to the plastid. The protein resides in the apicoplast. The enzyme catalyses ATP + H2O = ADP + phosphate + H(+). The protein operates within cofactor biosynthesis; iron-sulfur cluster biosynthesis. Its function is as follows. Participates in the sulfur mobilization (SUF) pathway for iron-sulfur (Fe-S) cluster biogenesis. As part of a complex consisting of SufB-SufC(2)-SufD, involved in assembly of [4Fe-4S] clusters. Exhibits ATPase activity. This is Iron-sulfur cluster assembly protein SufC from Plasmodium berghei (strain Anka).